A 95-amino-acid chain; its full sequence is Endoribonuclease VapD homolog (95 aa).

This sequence belongs to the VapD ribonuclease family. As to quaternary structure, homodimer.

In terms of biological role, cleaves ssRNA, mostly between U:A. This is Endoribonuclease VapD homolog from Helicobacter pylori (strain ATCC 700392 / 26695) (Campylobacter pylori).